A 60-amino-acid chain; its full sequence is Three-finger toxin MS3 (60 aa).

Cystine bridges form between C3–C22, C15–C39, C41–C52, and C53–C58.

This sequence belongs to the three-finger toxin family. Short-chain subfamily. Type I alpha-neurotoxin sub-subfamily. In terms of tissue distribution, expressed by the venom gland.

It is found in the secreted. Its function is as follows. Produces peripheral paralysis by blocking neuromuscular transmission at the postsynaptic site. Binds to and inhibits the endogenous nicotinic acetylcholine receptors (nAChR) in human rhabdomyosarcoma TE 671 cell line with an IC(50) of 346 mM. This neurotoxin is lethal to mice by intraperitoneal injection and to zebrafish by injection at the back of the dorsolateral region. This is Three-finger toxin MS3 from Micrurus surinamensis (Surinam coral snake).